The chain runs to 90 residues: UPF0237 protein BL1209.1 (90 aa).

The region spanning 5–79 (IITVVGQDTV…DDIGVRIRCQ (75 aa)) is the ACT domain.

Belongs to the UPF0237 family.

In Bifidobacterium longum (strain NCC 2705), this protein is UPF0237 protein BL1209.1.